The chain runs to 200 residues: NADH-quinone oxidoreductase subunit C (200 aa).

It belongs to the complex I 30 kDa subunit family. NDH-1 is composed of 14 different subunits. Subunits NuoB, C, D, E, F, and G constitute the peripheral sector of the complex.

Its subcellular location is the cell inner membrane. The catalysed reaction is a quinone + NADH + 5 H(+)(in) = a quinol + NAD(+) + 4 H(+)(out). Its function is as follows. NDH-1 shuttles electrons from NADH, via FMN and iron-sulfur (Fe-S) centers, to quinones in the respiratory chain. The immediate electron acceptor for the enzyme in this species is believed to be ubiquinone. Couples the redox reaction to proton translocation (for every two electrons transferred, four hydrogen ions are translocated across the cytoplasmic membrane), and thus conserves the redox energy in a proton gradient. This is NADH-quinone oxidoreductase subunit C from Cereibacter sphaeroides (strain ATCC 17029 / ATH 2.4.9) (Rhodobacter sphaeroides).